Reading from the N-terminus, the 234-residue chain is Melanoregulin (234 aa).

Positions 215–234 (MNQNISGGEDEDEDESEPDD) are disordered. Residues 222–234 (GEDEDEDESEPDD) show a composition bias toward acidic residues.

It belongs to the melanoregulin family.

It localises to the apical cell membrane. The protein localises to the melanosome membrane. The protein resides in the lysosome membrane. Its subcellular location is the cytoplasmic vesicle membrane. Probably functions as a cargo-recognition protein that couples cytoplasmic vesicles to the transport machinery. Contributes to retrograde melanosome transport from the cell periphery to the center. Overexpression causes accumulation of late endosomes and/or lysosomes at the microtubule organising center (MTOC) at the center of the cell. Probably binds cholesterol and requires the presence of cholesterol in membranes to function in microtubule-mediated retrograde organelle transport. Binds phosphatidylinositol 3-phosphate, phosphatidylinositol 4-phosphate, phosphatidylinositol 5-phosphate and phosphatidylinositol 3,5-bisphosphate. In Danio rerio (Zebrafish), this protein is Melanoregulin (mreg).